The following is a 375-amino-acid chain: EP300-interacting inhibitor of differentiation 3 (375 aa).

The stretch at 23-51 (AWQHLVKQEEEEAVKKEEKEEGEDEEEEG) forms a coiled coil. Residues 30–68 (QEEEEAVKKEEKEEGEDEEEEGSDSSSDDPNPEPPCMHP) are disordered. Residues 42 to 60 (EEGEDEEEEGSDSSSDDPN) are compositionally biased toward acidic residues.

The protein belongs to the NSE4 family. As to quaternary structure, component of the SMC5-SMC6 complex which consists at least of SMC5, SMC6, NSMCE2, NSMCE1, NSMCE4A or EID3 and NSMCE3; EID3 seems to be a testis-specific subunit. NSMCE1, NSMCE4A or EID3 and NSMCE3 probably form a subcomplex that bridges the head domains of the SMC5:SMC6 heterodimer. Homodimer, and heterodimer with EID2. Interacts with the C-terminal region of CREBBP.

Its subcellular location is the nucleus. The protein resides in the cytoplasm. It localises to the chromosome. The protein localises to the telomere. In terms of biological role, tissue-specific component of the SMC5-SMC6 complex, a complex involved in repair of DNA double-strand breaks by homologous recombination. The complex may promote sister chromatid homologous recombination by recruiting the SMC1-SMC3 cohesin complex to double-strand breaks. The complex is required for telomere maintenance via recombination and mediates sumoylation of shelterin complex (telosome) components. Acts as a repressor of nuclear receptor-dependent transcription possibly by interfering with CREBBP-dependent coactivation. May function as a coinhibitor of other CREBBP/EP300-dependent transcription factors. The chain is EP300-interacting inhibitor of differentiation 3 from Mus musculus (Mouse).